The chain runs to 188 residues: Accessory gene regulator protein B (188 aa).

4 helical membrane-spanning segments follow: residues 49-69 (VALIFHTFLYTLFTHVSYFLV), 100-122 (VYFQVNLGIMYSVVAIGTVLIIY), 143-163 (LLSIIITMVLLIISFLAPEPF), and 164-184 (KQLILLGITLESITLLPIFFP).

The protein belongs to the AgrB family.

The protein localises to the cell membrane. Essential for the production of a quorum sensing system signal molecule, the autoinducing peptide (AIP). This quorum sensing system is responsible for the regulation of the expression of virulence factor genes. Involved in the proteolytic processing of AgrD, the precursor of AIP. The chain is Accessory gene regulator protein B from Staphylococcus haemolyticus (strain JCSC1435).